The sequence spans 200 residues: 3-isopropylmalate dehydratase small subunit (200 aa).

Belongs to the LeuD family. LeuD type 1 subfamily. In terms of assembly, heterodimer of LeuC and LeuD.

The enzyme catalyses (2R,3S)-3-isopropylmalate = (2S)-2-isopropylmalate. Its pathway is amino-acid biosynthesis; L-leucine biosynthesis; L-leucine from 3-methyl-2-oxobutanoate: step 2/4. Functionally, catalyzes the isomerization between 2-isopropylmalate and 3-isopropylmalate, via the formation of 2-isopropylmaleate. The protein is 3-isopropylmalate dehydratase small subunit of Erythrobacter litoralis (strain HTCC2594).